The following is a 342-amino-acid chain: RNA 3'-terminal phosphate cyclase (342 aa).

This sequence belongs to the RNA 3'-terminal cyclase family. Type 1 subfamily.

Its subcellular location is the cytoplasm. It catalyses the reaction a 3'-end 3'-phospho-ribonucleotide-RNA + GTP = a 3'-end 2',3'-cyclophospho-ribonucleotide-RNA + GMP + diphosphate. Its activity is regulated as follows. Inhibited by GMP. Its function is as follows. Catalyzes the GTP-dependent conversion of 3'-phosphate to a 2',3'-cyclic phosphodiester at the end of RNA. The biological role of this enzyme is unknown but it is likely to function in some aspects of cellular RNA processing. The sequence is that of RNA 3'-terminal phosphate cyclase from Pyrococcus furiosus (strain ATCC 43587 / DSM 3638 / JCM 8422 / Vc1).